A 749-amino-acid chain; its full sequence is Cytosolic phospholipase A2 (749 aa).

The C2 domain maps to 1-124 (MASIDPYQHI…GEKKQVPFTF (124 aa)). Residues 1–178 (MASIDPYQHI…LRKLLGPEKT (178 aa)) are phospholipid binding. Aspartate 40, threonine 41, aspartate 43, asparagine 65, aspartate 93, alanine 94, and asparagine 95 together coordinate Ca(2+). One can recognise a PLA2c domain in the interval 138–740 (VCSSTDLRFS…NDVESRKLHH (603 aa)). Residue serine 229 is the Nucleophile of the active site. The interval 428-452 (HILGNDSSDSDDEMQEPKGTENAKA) is disordered. A compositionally biased stretch (basic and acidic residues) spans 442-452 (QEPKGTENAKA). Aspartate 549 acts as the Proton acceptor in catalysis. Residues 729–749 (SLNDVESRKLHHKDSQSKFQM) form a disordered region. Positions 733 to 749 (VESRKLHHKDSQSKFQM) are enriched in basic and acidic residues.

Its subcellular location is the cytoplasm. It is found in the cytoplasmic vesicle. It catalyses the reaction a 1,2-diacyl-sn-glycero-3-phosphocholine + H2O = a 1-acyl-sn-glycero-3-phosphocholine + a fatty acid + H(+). The catalysed reaction is a 1-acyl-sn-glycero-3-phosphocholine + H2O = sn-glycerol 3-phosphocholine + a fatty acid + H(+). With respect to regulation, stimulated by agonists such as ATP, EGF, thrombin and bradykinin as well as by cytosolic Ca(2+). In terms of biological role, selectively hydrolyzes arachidonyl phospholipids in the sn-2 position releasing arachidonic acid. Together with its lysophospholipid activity, it is implicated in the initiation of the inflammatory response. This chain is Cytosolic phospholipase A2 (pla2g4a), found in Xenopus laevis (African clawed frog).